Reading from the N-terminus, the 373-residue chain is Probable pectin lyase C (373 aa).

A signal peptide spans 1-17 (MKKYLLSLLAAVTYTTA). Intrachain disulfides connect cysteine 78–cysteine 95 and cysteine 87–cysteine 215. N-linked (GlcNAc...) asparagine glycosylation is found at asparagine 140 and asparagine 229. Arginine 245 is an active-site residue. A disulfide bridge links cysteine 315 with cysteine 323.

It belongs to the polysaccharide lyase 1 family.

It localises to the secreted. The catalysed reaction is Eliminative cleavage of (1-&gt;4)-alpha-D-galacturonan methyl ester to give oligosaccharides with 4-deoxy-6-O-methyl-alpha-D-galact-4-enuronosyl groups at their non-reducing ends.. Pectinolytic enzymes consist of four classes of enzymes: pectin lyase, polygalacturonase, pectin methylesterase and rhamnogalacturonase. Among pectinolytic enzymes, pectin lyase is the most important in depolymerization of pectin, since it cleaves internal glycosidic bonds of highly methylated pectins. The chain is Probable pectin lyase C (pelC) from Emericella nidulans (strain FGSC A4 / ATCC 38163 / CBS 112.46 / NRRL 194 / M139) (Aspergillus nidulans).